The following is a 130-amino-acid chain: Small ribosomal subunit protein uS11c (130 aa).

It belongs to the universal ribosomal protein uS11 family. Part of the 30S ribosomal subunit.

The protein localises to the plastid. It is found in the chloroplast. The chain is Small ribosomal subunit protein uS11c from Nephroselmis olivacea (Green alga).